The following is a 230-amino-acid chain: MARYDARLRGIGKAHACSAFAGHDFEGRNIMKTPWKFLAQLASRRRSASVQENFIAPDTDPEVIESETENKSPLPFDKPTQASGTPDHDSAVDRGSMLSDQLESDPNPLQEMNLTADIQEPGTPARSETKQSDAAGKRLGPQSQTSANSQKKPEIRCRERSKNARAEGVAQSAVATNEAETVQTSSSGDPFFNEVAILDEEIKELRRLLAQKLYLQNAQLKKMLERFDAS.

A signal peptide spans 1–21 (MARYDARLRGIGKAHACSAFA). Residues 47–190 (SASVQENFIA…TVQTSSSGDP (144 aa)) form a disordered region. Residues 141–150 (PQSQTSANSQ) show a composition bias toward polar residues. Residues 151–165 (KKPEIRCRERSKNAR) are compositionally biased toward basic and acidic residues. Over residues 173-188 (AVATNEAETVQTSSSG) the composition is skewed to polar residues.

To R.meliloti RA0936 and y4aO.

This is an uncharacterized protein from Sinorhizobium fredii (strain NBRC 101917 / NGR234).